The following is a 468-amino-acid chain: Chromosomal replication initiator protein DnaA (468 aa).

The domain I, interacts with DnaA modulators stretch occupies residues 1-84; sequence MSSSLWLQCL…RFEVGSRRVA (84 aa). A domain II region spans residues 84-131; sequence AAPKPAPTRTPADVAAESSAPAQLQARKPVHKTWDDDAQVIADINHRS. Positions 85–95 are enriched in low complexity; sequence APKPAPTRTPA. The segment at 85 to 104 is disordered; it reads APKPAPTRTPADVAAESSAP. Positions 132 to 348 are domain III, AAA+ region; sequence NVNPKHKFNN…GALNRVIANA (217 aa). Residues glycine 176, glycine 178, lysine 179, and threonine 180 each contribute to the ATP site. Positions 349 to 468 are domain IV, binds dsDNA; that stretch reads NFTGRPITID…YSNLIRTLSS (120 aa).

This sequence belongs to the DnaA family. Oligomerizes as a right-handed, spiral filament on DNA at oriC.

The protein resides in the cytoplasm. Its function is as follows. Plays an essential role in the initiation and regulation of chromosomal replication. ATP-DnaA binds to the origin of replication (oriC) to initiate formation of the DNA replication initiation complex once per cell cycle. Binds the DnaA box (a 9 base pair repeat at the origin) and separates the double-stranded (ds)DNA. Forms a right-handed helical filament on oriC DNA; dsDNA binds to the exterior of the filament while single-stranded (ss)DNA is stabiized in the filament's interior. The ATP-DnaA-oriC complex binds and stabilizes one strand of the AT-rich DNA unwinding element (DUE), permitting loading of DNA polymerase. After initiation quickly degrades to an ADP-DnaA complex that is not apt for DNA replication. Binds acidic phospholipids. In terms of biological role, complements a temperature-sensitive E.coli mutant, the DnaA consensus is 5'-TT(A/T)TNCACA-3'. The sequence is that of Chromosomal replication initiator protein DnaA from Vibrio harveyi (Beneckea harveyi).